Here is a 507-residue protein sequence, read N- to C-terminus: Maturase K (507 aa).

Belongs to the intron maturase 2 family. MatK subfamily.

It localises to the plastid. The protein localises to the chloroplast. In terms of biological role, usually encoded in the trnK tRNA gene intron. Probably assists in splicing its own and other chloroplast group II introns. The polypeptide is Maturase K (Euryale ferox (Gorgon plant)).